Here is a 39-residue protein sequence, read N- to C-terminus: Photosystem II reaction center protein Y (39 aa).

The helical transmembrane segment at 7-25 threads the bilayer; that stretch reads VLVVLLPVLLAGGWALKNI.

It belongs to the PsbY family. In terms of assembly, PSII is composed of 1 copy each of membrane proteins PsbA, PsbB, PsbC, PsbD, PsbE, PsbF, PsbH, PsbI, PsbJ, PsbK, PsbL, PsbM, PsbT, PsbX, PsbY, PsbZ, Psb30/Ycf12, peripheral proteins PsbO, CyanoQ (PsbQ), PsbU, PsbV and a large number of cofactors. It forms dimeric complexes.

The protein resides in the cellular thylakoid membrane. Functionally, loosely associated component of the core of photosystem II (PSII), it is not always seen in crystals. PSII is a light-driven water plastoquinone oxidoreductase, using light energy to abstract electrons from H(2)O, generating a proton gradient subsequently used for ATP formation. The chain is Photosystem II reaction center protein Y from Cyanothece sp. (strain PCC 7425 / ATCC 29141).